We begin with the raw amino-acid sequence, 955 residues long: 2-oxoglutarate dehydrogenase E1 component (955 aa).

Belongs to the alpha-ketoglutarate dehydrogenase family. In terms of assembly, homodimer. Part of the 2-oxoglutarate dehydrogenase (OGDH) complex composed of E1 (2-oxoglutarate dehydrogenase), E2 (dihydrolipoamide succinyltransferase) and E3 (dihydrolipoamide dehydrogenase); the complex contains multiple copies of the three enzymatic components (E1, E2 and E3). Thiamine diphosphate serves as cofactor.

It catalyses the reaction N(6)-[(R)-lipoyl]-L-lysyl-[protein] + 2-oxoglutarate + H(+) = N(6)-[(R)-S(8)-succinyldihydrolipoyl]-L-lysyl-[protein] + CO2. Its function is as follows. E1 component of the 2-oxoglutarate dehydrogenase (OGDH) complex which catalyzes the decarboxylation of 2-oxoglutarate, the first step in the conversion of 2-oxoglutarate to succinyl-CoA and CO(2). The polypeptide is 2-oxoglutarate dehydrogenase E1 component (Bacillus cereus (strain G9842)).